Here is a 510-residue protein sequence, read N- to C-terminus: F-box only protein 15 (510 aa).

Positions 77–117 constitute an F-box domain; it reads MPSEILLKIFSYLDAVSLLCTGCVSRRFYHLANDNFIWIGI.

Directly interacts with SKP1 and CUL1.

Its function is as follows. Substrate-recognition component of the SCF (SKP1-CUL1-F-box protein)-type E3 ubiquitin ligase complex. This Homo sapiens (Human) protein is F-box only protein 15 (FBXO15).